Here is a 386-residue protein sequence, read N- to C-terminus: Copper-containing nitrite reductase (386 aa).

Residues Met1 to Ala18 form the signal peptide. Cys19 carries N-palmitoyl cysteine lipidation. The S-diacylglycerol cysteine moiety is linked to residue Cys19. Plastocyanin-like domains lie at Trp97–Glu191 and Gly241–Glu342. Positions 130, 135, 170, 171, 179, and 184 each coordinate Cu cation. His135 lines the substrate pocket. His276 is a binding site for substrate. Residue His325 coordinates Cu cation. Positions Gly363–Tyr386 are disordered. Residues Ala364–Tyr386 show a composition bias toward low complexity. 3 consecutive repeat copies span residues Ala367 to Pro371, Ala372 to Pro376, and Ala377 to Pro381. Residues Ala367 to Pro381 form a 3 X 5 AA tandem repeats of A-A-S-A-P region.

This sequence belongs to the multicopper oxidase family. As to quaternary structure, homotrimer. It depends on Cu(+) as a cofactor. Cu(2+) serves as cofactor.

Its subcellular location is the cell outer membrane. The enzyme catalyses nitric oxide + Fe(III)-[cytochrome c] + H2O = Fe(II)-[cytochrome c] + nitrite + 2 H(+). Its function is as follows. Catalyzes the reduction of nitrite to nitric oxide (NO). It could be essential for growth and survival in oxygen-depleted environments. In Neisseria meningitidis serogroup A / serotype 4A (strain DSM 15465 / Z2491), this protein is Copper-containing nitrite reductase (aniA).